A 121-amino-acid chain; its full sequence is MIQPQTILQVADNSGARQLMCIRVLGGRKRYASIGDVIIAVVKDAIPNMPVKKSDVVRAVVVRTSKPVRRDTGMLIRFDDNAAVIVNQEGNPRGTRVFGPVARELRDRQFMKIISLAPEVL.

Belongs to the universal ribosomal protein uL14 family. In terms of assembly, part of the 50S ribosomal subunit.

The protein resides in the plastid. The protein localises to the chloroplast. Its function is as follows. Binds to 23S rRNA. The chain is Large ribosomal subunit protein uL14c from Nephroselmis olivacea (Green alga).